The primary structure comprises 886 residues: KH domain-containing protein hrpk-2 (886 aa).

The span at 359–368 (DNHFYNDKDS) shows a compositional bias: basic and acidic residues. Residues 359–433 (DNHFYNDKDS…SHRKESACVD (75 aa)) are disordered. Basic residues-rich tracts occupy residues 369-388 (GKHH…KKHY) and 415-425 (HERKKRQRSSH). KH domains follow at residues 698-761 (KETV…IEKI) and 775-839 (PGIF…AYLT).

This Caenorhabditis elegans protein is KH domain-containing protein hrpk-2.